A 334-amino-acid polypeptide reads, in one-letter code: Leukocyte cell-derived chemotaxin 1 (334 aa).

Residues Val-46–Trp-66 form a helical membrane-spanning segment. Positions Gly-105–Leu-201 constitute a BRICHOS domain. The cysteines at positions 132 and 193 are disulfide-linked. Positions Arg-211 to Arg-214 are excised as a propeptide. The tract at residues Glu-212 to Glu-268 is disordered. N-linked (GlcNAc...) asparagine glycosylation is present at Asn-243. Disulfide bonds link Cys-282–Cys-286, Cys-283–Cys-323, Cys-293–Cys-317, and Cys-297–Cys-313.

Belongs to the chondromodulin-1 family. After cleavage, the post-translationally modified ChM-I is secreted as a glycoprotein. In terms of tissue distribution, detected in cartilage, cardiac valves and valvular interstitial cells (at protein level). Expressed in eye.

It localises to the secreted. The protein localises to the extracellular space. It is found in the extracellular matrix. Its subcellular location is the endomembrane system. Its function is as follows. Bifunctional growth regulator that stimulates the growth of cultured chondrocytes in the presence of basic fibroblast growth factor (FGF) but inhibits the growth of cultured vascular endothelial cells. May contribute to the rapid growth of cartilage and vascular invasion prior to the replacement of cartilage by bone during endochondral bone development. Inhibits in vitro tube formation and mobilization of endothelial cells. Plays a role as antiangiogenic factor in cardiac valves to suppress neovascularization. The protein is Leukocyte cell-derived chemotaxin 1 of Rattus norvegicus (Rat).